The chain runs to 172 residues: Scytalone dehydratase-like protein Arp1 (172 aa).

Position 49 (Tyr-49) interacts with substrate. Residues His-84 and His-109 contribute to the active site. Asn-130 is a substrate binding site.

Belongs to the scytalone dehydratase family. In terms of assembly, homotrimer. Each subunit contains an active site, located in the central part of the hydrophobic core of the monomer, which functions independently.

In terms of biological role, scytalone dehydratase-like protein; part of the Pks2 gene cluster that mediates the formation of infectious structures (appressoria), enabling these fungi to kill insects faster. The product of the Pks2 gene cluster is different from the one of Pks1 and has still not been identified. The protein is Scytalone dehydratase-like protein Arp1 of Metarhizium guizhouense (strain ARSEF 977).